The chain runs to 365 residues: uncharacterized protein (365 aa).

The 245-residue stretch at 45 to 289 (FSIGKSLTII…LKEVKKSNPK (245 aa)) folds into the Radical SAM core domain. [4Fe-4S] cluster is bound by residues Cys-60, Cys-68, and Cys-71.

[4Fe-4S] cluster is required as a cofactor.

This is an uncharacterized protein from Methanocaldococcus jannaschii (strain ATCC 43067 / DSM 2661 / JAL-1 / JCM 10045 / NBRC 100440) (Methanococcus jannaschii).